A 158-amino-acid polypeptide reads, in one-letter code: SsrA-binding protein (158 aa).

The segment at 131–158 (YDKRQTLRERQDKREADRAMSSHRRLGE) is disordered.

The protein belongs to the SmpB family.

The protein resides in the cytoplasm. In terms of biological role, required for rescue of stalled ribosomes mediated by trans-translation. Binds to transfer-messenger RNA (tmRNA), required for stable association of tmRNA with ribosomes. tmRNA and SmpB together mimic tRNA shape, replacing the anticodon stem-loop with SmpB. tmRNA is encoded by the ssrA gene; the 2 termini fold to resemble tRNA(Ala) and it encodes a 'tag peptide', a short internal open reading frame. During trans-translation Ala-aminoacylated tmRNA acts like a tRNA, entering the A-site of stalled ribosomes, displacing the stalled mRNA. The ribosome then switches to translate the ORF on the tmRNA; the nascent peptide is terminated with the 'tag peptide' encoded by the tmRNA and targeted for degradation. The ribosome is freed to recommence translation, which seems to be the essential function of trans-translation. The protein is SsrA-binding protein of Clavibacter michiganensis subsp. michiganensis (strain NCPPB 382).